A 538-amino-acid chain; its full sequence is MATTTQPQNILMDEPLNLPNNSAHNNNYGNINANIRTFAGMSMHMHPARLNSLEFLHKPRRLSNVKLHRLPQDELQRNTDMNKGMYFNGKQVHAHHPFINSGANFNAHHQDVSKLGEEEDEISPLSHDNFQYESEENGNPSPPIYKKSGELVKSSLKRRSKSLPITPKSIFNKTGSKSKHVNLDHVDTRLLQRSKSVHFDRVLPIKLFNENEKPIDVGKQMVQQDVLNFKHKPLTRLSALNGGSDSVPIEDLLSENNQNEYGDTWLQNPKGVFLFGTNSNNRRNKKKKFKLSDDDSDIENDNDSDDAINRLVRQQDKDQAHLAHGLKNLLINDDDDYLETRTNSAKSGANLFIGNSKRIVGLYNKNFPILSDRNRKSLKLNIFLNLSRGRPVFLQEITLLTGFHNMVIIGKVFVKNIYFDKKIIVRYTWDAWRTFHESECVYFSNANGILPGSNMDIFKFSIDDIHNPNDKDSNISQLEFCIQYLTWGVDRSRKEYWDNNDSANYKIDVVTNETRTGPTTDVNDNYEMKHSLFRNPFH.

Serine 162, serine 196, serine 296, and serine 304 each carry phosphoserine. The CBM21 domain occupies leucine 384–aspartate 508.

Interacts with glycogen synthase 2 (GSY2); possibly also interacts with phosphatase 1 (GLC7). This Saccharomyces cerevisiae (strain ATCC 204508 / S288c) (Baker's yeast) protein is GSY2-interacting protein PIG2 (PIG2).